Consider the following 208-residue polypeptide: High frequency lysogenization protein HflD homolog (208 aa).

The protein belongs to the HflD family.

The protein resides in the cytoplasm. The protein localises to the cell inner membrane. This chain is High frequency lysogenization protein HflD homolog, found in Yersinia enterocolitica serotype O:8 / biotype 1B (strain NCTC 13174 / 8081).